A 172-amino-acid chain; its full sequence is Adenine phosphoribosyltransferase (172 aa).

It belongs to the purine/pyrimidine phosphoribosyltransferase family. As to quaternary structure, homodimer.

The protein resides in the cytoplasm. The enzyme catalyses AMP + diphosphate = 5-phospho-alpha-D-ribose 1-diphosphate + adenine. It participates in purine metabolism; AMP biosynthesis via salvage pathway; AMP from adenine: step 1/1. Its function is as follows. Catalyzes a salvage reaction resulting in the formation of AMP, that is energically less costly than de novo synthesis. The protein is Adenine phosphoribosyltransferase of Herpetosiphon aurantiacus (strain ATCC 23779 / DSM 785 / 114-95).